A 1040-amino-acid polypeptide reads, in one-letter code: MQVLPPSSTGGPSRLFIMRPVATTLLMVAILLAGIIGYRALPVSALPEVDYPTIQVVTLYPGASPDVMTSAVTAPLERQFGQMSGLKQMSSQSSGGASVITLQFQLTLPLDVAEQEVQAAINAATNLLPSDLPNPPVYSKVNPADPPIMTLAVTSTAMPMTQVEDMVETRVAQKISQISGVGLVTLSGGQRPAVRVKLNAQAIAALGLTSETVRTAITGANVNSAKGSLDGPSRAVTLSANDQMQSAEEYRQLIIAYQNGAPIRLGDVATVEQGAENSWLGAWANKEQAIVMNVQRQPGANIISTADSIRQMLPQLTESLPKSVKVTVLSDRTTNIRASVDDTQFELMMAIALVVMIIYLFLRNIPATIIPGVAVPLSLIGTFAVMVFLDFSINNLTLMALTIATGFVVDDAIVVIENISRYIEKGEKPLAAALKGAGEIGFTIISLTFSLIAVLIPLLFMGDIVGRLFREFAITLAVAILISAVVSLTLTPMMCARMLSQESLRKQNRFSRASEKMFDRIIAAYGRGLAKVLNHPWLTLSVALSTLLLSVLLWVFIPKGFFPVQDNGIIQGTLQAPQSSSFANMAQRQRQVADVILQDPAVQSLTSFVGVDGTNPSLNSARLQINLKPLDERDDRVQKVIARLQTAVDKVPGVDLFLQPTQDLTIDTQVSRTQYQFTLQATSLDALSTWVPQLMEKLQQLPQLSDVSSDWQDKGLVAYVNVDRDSASRLGISMADVDNALYNAFGQRLISTIYTQANQYRVVLEHNTENTPGLAALDTIRLTSSDGGVVPLSSIAKIEQRFAPLSINHLDQFPVTTISFNVPDNYSLGDAVQAIMDTEKTLNLPVDITTQFQGSTLAFQSALGSTVWLIVAAVVAMYIVLGILYESFIHPITILSTLPTAGVGALLALLIAGSELDVIAIIGIILLIGIVKKNAIMMIDFALAAEREQGMSPREAIYQACLLRFRPILMTTLAALLGALPLMLSTGVGAELRRPLGIGMVGGLIVSQVLTLFTTPVIYLLFDRLALWTKSRFARHEEEA.

The next 12 membrane-spanning stretches (helical) occupy residues Phe-16–Ile-36, Leu-347–Ala-367, Ile-369–Leu-389, Leu-396–Ile-416, Ile-440–Phe-460, Phe-472–Pro-492, Trp-537–Ile-557, Leu-863–Ile-883, Phe-888–Ala-908, Ile-911–Val-931, Ile-968–Val-988, and Ile-998–Ile-1018.

The protein belongs to the resistance-nodulation-cell division (RND) (TC 2.A.6) family. MdtB subfamily. In terms of assembly, part of a tripartite efflux system composed of MdtA, MdtB and MdtC. MdtB forms a heteromultimer with MdtC.

It is found in the cell inner membrane. In terms of biological role, the MdtABC tripartite complex confers resistance against novobiocin and deoxycholate. This chain is Multidrug resistance protein MdtB, found in Escherichia coli (strain K12 / MC4100 / BW2952).